Reading from the N-terminus, the 90-residue chain is Bombyxin B-12 (90 aa).

A signal peptide spans 1–20 (MMKTTIMFMLVVVISLTYSS). 3 disulfides stabilise this stretch: C30–C76, C42–C89, and C75–C80. A propeptide spans 49-67 (SGAQYAPYFWTRQYLGSRG) (c peptide like).

The protein belongs to the insulin family. As to quaternary structure, heterodimer of a B chain and an A chain linked by two disulfide bonds.

It is found in the secreted. Brain peptide responsible for activation of prothoracic glands to produce ecdysone in insects. The chain is Bombyxin B-12 (BBXB12) from Bombyx mori (Silk moth).